Reading from the N-terminus, the 3901-residue chain is Nonribosomal peptide synthetase opaA (3901 aa).

An adenylation 1 region spans residues 248 to 641; the sequence is HNAQHHPSVV…HRKDNQIKIR (394 aa). Residues 780–854 form the Carrier 1 domain; it reads LPVTANEIVV…DMATRLTRIK (75 aa). At S815 the chain carries O-(pantetheine 4'-phosphoryl)serine. Positions 891-1164 are condensation 1; sequence DAYPCSALQE…IATVPIRINL (274 aa). Residues 1328–1725 are adenylation 2; sequence QSHAQKTPKS…GRIGNQVKLR (398 aa). The region spanning 1858 to 1936 is the Carrier 2 domain; sequence RTPLDTERDL…QIAAQAATRA (79 aa). An O-(pantetheine 4'-phosphoryl)serine modification is found at S1895. The segment at 1953–2261 is epimerase; sequence KLTPIQQLFF…KDARRRLTRN (309 aa). The segment at 2403–2826 is condensation 2; sequence ENLYPCAPIQ…LVSTDHKRLL (424 aa). An adenylation 3 region spans residues 2846–3243; it reads QQHVRETPDA…GRKDSQIKIR (398 aa). Positions 3375 to 3451 constitute a Carrier 3 domain; that stretch reads LPSTAGEQLL…ALAARSRSKD (77 aa). Residue S3412 is modified to O-(pantetheine 4'-phosphoryl)serine. The tract at residues 3509 to 3837 is condensation 3; it reads HHFSFAVEGK…EDLKTHFTLN (329 aa).

It belongs to the NRP synthetase family.

In terms of biological role, nonribosomal peptide synthetase; part of the gene cluster that mediates the biosynthesis of oxepinamides, derivatives of anthranilyl-containing tripeptides that share an oxepin ring and a fused pyrimidinone moiety. The nonribosomal peptide synthetase (NRPS) opaA assembles the quinazolinone core with D-Phe incorporation. The first adenylation domain (A1) of opaA loads and activates anthranilic acid whereas the second A domain (A2) is for activating of L-Phe, which is then converted to D-form by the E domain. The third A domain (A3) is responsible for L-Ile activation and the terminal condensation domain C3 for cyclization and releasing the NRPS product protuboxepin K. The cytochrome P450 monooxygenase opaB then catalyzes alone the oxepin ring formation to convert protuboxepin K into protuboxepin A. The flavoenzyme opaC installs subsequently one hydroxyl group at the oxepin ring, accompanied by double bond migration, to form 15-epi-oxepinamide E. The epimerase opaE changes the D-Phe residue back to L-form, leading to oxepinamide E, which is further methylated at the hydroxyl group at C-12 by the O-methyltransferase OpaF to yield oxepinamide F. This Aspergillus ustus protein is Nonribosomal peptide synthetase opaA.